The chain runs to 229 residues: ATP synthase subunit a (229 aa).

Helical transmembrane passes span 25–45 (ADAV…SIAA), 82–102 (FFPL…IGLV), 104–124 (GFFP…VVFV), 142–162 (FLGP…IGHL), 181–201 (LVLI…MMLM), and 202–222 (GVLV…IYIQ).

This sequence belongs to the ATPase A chain family. In terms of assembly, F-type ATPases have 2 components, CF(1) - the catalytic core - and CF(0) - the membrane proton channel. CF(1) has five subunits: alpha(3), beta(3), gamma(1), delta(1), epsilon(1). CF(0) has three main subunits: a(1), b(2) and c(9-12). The alpha and beta chains form an alternating ring which encloses part of the gamma chain. CF(1) is attached to CF(0) by a central stalk formed by the gamma and epsilon chains, while a peripheral stalk is formed by the delta and b chains.

It is found in the cell inner membrane. Its function is as follows. Key component of the proton channel; it plays a direct role in the translocation of protons across the membrane. The polypeptide is ATP synthase subunit a (Citrifermentans bemidjiense (strain ATCC BAA-1014 / DSM 16622 / JCM 12645 / Bem) (Geobacter bemidjiensis)).